Consider the following 343-residue polypeptide: N-acetyl-gamma-glutamyl-phosphate reductase (343 aa).

Cys148 is a catalytic residue.

This sequence belongs to the NAGSA dehydrogenase family. Type 1 subfamily.

It is found in the cytoplasm. The catalysed reaction is N-acetyl-L-glutamate 5-semialdehyde + phosphate + NADP(+) = N-acetyl-L-glutamyl 5-phosphate + NADPH + H(+). It participates in amino-acid biosynthesis; L-arginine biosynthesis; N(2)-acetyl-L-ornithine from L-glutamate: step 3/4. In terms of biological role, catalyzes the NADPH-dependent reduction of N-acetyl-5-glutamyl phosphate to yield N-acetyl-L-glutamate 5-semialdehyde. This Caldicellulosiruptor saccharolyticus (strain ATCC 43494 / DSM 8903 / Tp8T 6331) protein is N-acetyl-gamma-glutamyl-phosphate reductase.